Reading from the N-terminus, the 95-residue chain is Aspartyl/glutamyl-tRNA(Asn/Gln) amidotransferase subunit C (95 aa).

Belongs to the GatC family. Heterotrimer of A, B and C subunits.

The enzyme catalyses L-glutamyl-tRNA(Gln) + L-glutamine + ATP + H2O = L-glutaminyl-tRNA(Gln) + L-glutamate + ADP + phosphate + H(+). It carries out the reaction L-aspartyl-tRNA(Asn) + L-glutamine + ATP + H2O = L-asparaginyl-tRNA(Asn) + L-glutamate + ADP + phosphate + 2 H(+). In terms of biological role, allows the formation of correctly charged Asn-tRNA(Asn) or Gln-tRNA(Gln) through the transamidation of misacylated Asp-tRNA(Asn) or Glu-tRNA(Gln) in organisms which lack either or both of asparaginyl-tRNA or glutaminyl-tRNA synthetases. The reaction takes place in the presence of glutamine and ATP through an activated phospho-Asp-tRNA(Asn) or phospho-Glu-tRNA(Gln). The polypeptide is Aspartyl/glutamyl-tRNA(Asn/Gln) amidotransferase subunit C (Marinobacter nauticus (strain ATCC 700491 / DSM 11845 / VT8) (Marinobacter aquaeolei)).